The chain runs to 234 residues: Large ribosomal subunit protein uL1 (234 aa).

This sequence belongs to the universal ribosomal protein uL1 family. In terms of assembly, part of the 50S ribosomal subunit.

Functionally, binds directly to 23S rRNA. The L1 stalk is quite mobile in the ribosome, and is involved in E site tRNA release. Its function is as follows. Protein L1 is also a translational repressor protein, it controls the translation of the L11 operon by binding to its mRNA. The protein is Large ribosomal subunit protein uL1 of Escherichia coli O127:H6 (strain E2348/69 / EPEC).